The primary structure comprises 224 residues: MSGKTVIVLLSGGLDSMVCAGLAREAGARIVALTIDYNQRHRVELESAARIAAHVGAAEHIVLPLDLRRFGGSALTADIDVPKDGVGTDIPVTYVPARNLIFLSLTLGLAEARQAADIVIGVNALDYSGYPDCRPAFIQGFEKLAALATRDGDQGVRFHIHAPLQHMTKADIAAEAARLGMDAAMSWSCYDPTPEGLHCGACDSCRLRRKGFADAGLADPTRYA.

10–20 contributes to the ATP binding site; it reads LSGGLDSMVCA. Positions 189, 199, 202, and 205 each coordinate Zn(2+).

It belongs to the QueC family. Requires Zn(2+) as cofactor.

It catalyses the reaction 7-carboxy-7-deazaguanine + NH4(+) + ATP = 7-cyano-7-deazaguanine + ADP + phosphate + H2O + H(+). It participates in purine metabolism; 7-cyano-7-deazaguanine biosynthesis. Its function is as follows. Catalyzes the ATP-dependent conversion of 7-carboxy-7-deazaguanine (CDG) to 7-cyano-7-deazaguanine (preQ(0)). This is 7-cyano-7-deazaguanine synthase 1 from Sphingopyxis alaskensis (strain DSM 13593 / LMG 18877 / RB2256) (Sphingomonas alaskensis).